A 236-amino-acid polypeptide reads, in one-letter code: Cytochrome c biogenesis ATP-binding export protein CcmA (236 aa).

Residues 14–235 (LEATGLQVAR…SAGDRVTGTE (222 aa)) form the ABC transporter domain. 46-53 (GANGSGKT) provides a ligand contact to ATP.

This sequence belongs to the ABC transporter superfamily. CcmA exporter (TC 3.A.1.107) family. In terms of assembly, the complex is composed of two ATP-binding proteins (CcmA) and two transmembrane proteins (CcmB).

The protein resides in the cell inner membrane. It carries out the reaction heme b(in) + ATP + H2O = heme b(out) + ADP + phosphate + H(+). Part of the ABC transporter complex CcmAB involved in the biogenesis of c-type cytochromes; once thought to export heme, this seems not to be the case, but its exact role is uncertain. Responsible for energy coupling to the transport system. The sequence is that of Cytochrome c biogenesis ATP-binding export protein CcmA from Alkalilimnicola ehrlichii (strain ATCC BAA-1101 / DSM 17681 / MLHE-1).